A 157-amino-acid chain; its full sequence is Transcription elongation factor GreA (157 aa).

Belongs to the GreA/GreB family.

In terms of biological role, necessary for efficient RNA polymerase transcription elongation past template-encoded arresting sites. The arresting sites in DNA have the property of trapping a certain fraction of elongating RNA polymerases that pass through, resulting in locked ternary complexes. Cleavage of the nascent transcript by cleavage factors such as GreA or GreB allows the resumption of elongation from the new 3'terminus. GreA releases sequences of 2 to 3 nucleotides. In Brucella anthropi (strain ATCC 49188 / DSM 6882 / CCUG 24695 / JCM 21032 / LMG 3331 / NBRC 15819 / NCTC 12168 / Alc 37) (Ochrobactrum anthropi), this protein is Transcription elongation factor GreA.